The sequence spans 570 residues: Protein mom-5 (570 aa).

The first 16 residues, 1–16 (MHRHILILFLFGCLSA), serve as a signal peptide directing secretion. At 17–230 (DQRLSSTSIS…FDGRVRRILR (214 aa)) the chain is on the extracellular side. Residues 32–148 (STTRKCEHIT…FPVTDLCVGK (117 aa)) enclose the FZ domain. Cystine bridges form between Cys-37–Cys-98, Cys-45–Cys-91, Cys-82–Cys-119, Cys-108–Cys-145, and Cys-112–Cys-136. Asn-51 is a glycosylation site (N-linked (GlcNAc...) asparagine). N-linked (GlcNAc...) asparagine glycosylation occurs at Asn-149. A helical membrane pass occupies residues 231 to 251 (IWTAAWSVACFVCSLFTLVTF). The Cytoplasmic portion of the chain corresponds to 252 to 264 (LVDLSRFAYPVRP). A helical membrane pass occupies residues 265-285 (ILYLAFCYLAISTVYMIGVVG). Residues 286 to 319 (EDGFACGTYGSTPTTLVTQGGENVGCSALAVVHY) are Extracellular-facing. The chain crosses the membrane as a helical span at residues 320-340 (FFFMSSCAWWLVLCLAWFLAA). The Cytoplasmic portion of the chain corresponds to 341 to 348 (NLKWGAES). The chain crosses the membrane as a helical span at residues 349–369 (IAALSPYFHAMCWGVPAVLSV). The Extracellular segment spans residues 370-395 (TVLVTNSVDGDVFTGICSVGNLNPSA). A helical membrane pass occupies residues 396-416 (LVYFFFTPIVVSLALGAVLLV). The Cytoplasmic segment spans residues 417-449 (CGIWSMIRIRSYIKLQHADVERNISKLEKLMLR). The chain crosses the membrane as a helical span at residues 450 to 470 (IGAFAIMYSLPTAMNAAIMWY). At 471–515 (QAVNMPAWLEGWLHHRCVRLQDRELFGFTYPVDDCPMDPKVAAPE) the chain is on the extracellular side. A helical transmembrane segment spans residues 516–536 (IIVFLLKYVSQLVVGITCAIW). Over 537–570 (VVSSKTLSSYHKAYLALSSRSPTVPAHVDQVNMR) the chain is Cytoplasmic.

The protein belongs to the G-protein coupled receptor Fz/Smo family.

The protein resides in the cell membrane. It localises to the early endosome. Functionally, receptor for Wnt proteins. Most frizzled receptors are coupled to the beta-catenin canonical signaling pathway, which leads to the activation of disheveled proteins, inhibition of gsk-3 kinase, nuclear accumulation of beta-catenin and activation of Wnt target genes. A second signaling pathway involving PKC and calcium fluxes has been seen for some family members, but it is not yet clear if it represents a distinct pathway or if it can be integrated in the canonical pathway, as pkc seems to be required for Wnt-mediated inactivation of gsk-3 kinase. Both pathways seem to involve interactions with G-proteins. Required in embryonic development for the correct positioning and orientation of the mitotic spindles and division planes in blastomere cells. During early embryonic cell divisions, directs the asymmetric positioning of transcription factors such as pop-1 and dsh-2 in daughter cells in order to determine cell fate specification. Acts redundantly with other Wnt receptors such as lin-17 to control vulval precursor cell specification and also the polarity of different cell types including distal tip cells, seam cells, AVG interneurons and P-cells and their descendants. Plays a role in the migration of cell types including distal tip cells and the QR neuroblast descendants, QR.p and QR.pa during larval development. Negatively regulates the unc-6/Netrin receptors unc-5 and unc-40 to control distal tip cell polarity and migration. Acts through ced-5/DOCK180 and ced-10/Rac to control both distal tip cell migration and the phagocytic clearance of apoptotic cell corpses. Furthermore, it is also required for the migration and axon guidance of the different neuronal cell types including CAN, ALM, HSN and the two mechanosensory neurons AVM and PVM. Mediates Wnt receptor cfz-2 in directing ALM migration, but may also act redundantly with the Wnt receptors cfz-2 and mig-1 to direct the migration of other neuronal cell types including CAN and HSN. Mediates Wnt ligand egl-20 in the control of the anterior-posterior axon guidance of AVM and PVM neurons. In Caenorhabditis elegans, this protein is Protein mom-5.